The sequence spans 299 residues: uncharacterized protein (299 aa).

Active-site charge relay system residues include T47 and Y109. The Proton donor role is filled by Y138. K168 functions as the Schiff-base intermediate with substrate in the catalytic mechanism.

It belongs to the DapA family. In terms of assembly, homotetramer.

The protein localises to the cytoplasm. This is an uncharacterized protein from Chloroflexus aurantiacus (strain ATCC 29366 / DSM 635 / J-10-fl).